A 226-amino-acid chain; its full sequence is Deoxyribose-phosphate aldolase (226 aa).

Aspartate 96 functions as the Proton donor/acceptor in the catalytic mechanism. Lysine 157 acts as the Schiff-base intermediate with acetaldehyde in catalysis. The active-site Proton donor/acceptor is the lysine 185.

Belongs to the DeoC/FbaB aldolase family. DeoC type 1 subfamily.

It is found in the cytoplasm. The catalysed reaction is 2-deoxy-D-ribose 5-phosphate = D-glyceraldehyde 3-phosphate + acetaldehyde. It participates in carbohydrate degradation; 2-deoxy-D-ribose 1-phosphate degradation; D-glyceraldehyde 3-phosphate and acetaldehyde from 2-deoxy-alpha-D-ribose 1-phosphate: step 2/2. Its function is as follows. Catalyzes a reversible aldol reaction between acetaldehyde and D-glyceraldehyde 3-phosphate to generate 2-deoxy-D-ribose 5-phosphate. This Trichormus variabilis (strain ATCC 29413 / PCC 7937) (Anabaena variabilis) protein is Deoxyribose-phosphate aldolase.